Reading from the N-terminus, the 109-residue chain is uncharacterized protein (109 aa).

The signal sequence occupies residues 1–22; that stretch reads MKRFPLFLLFTLLTLSTVPAQA. A disordered region spans residues 39–109; it reads AYNPDRGRDY…ERRMEDEYGR (71 aa). The span at 41–109 shows a compositional bias: basic and acidic residues; the sequence is NPDRGRDYED…ERRMEDEYGR (69 aa).

This is an uncharacterized protein from Escherichia coli O6:H1 (strain CFT073 / ATCC 700928 / UPEC).